The primary structure comprises 313 residues: 4-hydroxy-3-methylbut-2-enyl diphosphate reductase (313 aa).

Residue C12 coordinates [4Fe-4S] cluster. (2E)-4-hydroxy-3-methylbut-2-enyl diphosphate contacts are provided by H41 and H74. Dimethylallyl diphosphate-binding residues include H41 and H74. Positions 41 and 74 each coordinate isopentenyl diphosphate. C96 is a binding site for [4Fe-4S] cluster. Position 124 (H124) interacts with (2E)-4-hydroxy-3-methylbut-2-enyl diphosphate. H124 is a dimethylallyl diphosphate binding site. H124 contacts isopentenyl diphosphate. E126 functions as the Proton donor in the catalytic mechanism. T167 contributes to the (2E)-4-hydroxy-3-methylbut-2-enyl diphosphate binding site. Residue C197 coordinates [4Fe-4S] cluster. 4 residues coordinate (2E)-4-hydroxy-3-methylbut-2-enyl diphosphate: S225, S226, N227, and S269. Dimethylallyl diphosphate-binding residues include S225, S226, N227, and S269. Positions 225, 226, 227, and 269 each coordinate isopentenyl diphosphate.

This sequence belongs to the IspH family. Homodimer. It depends on [4Fe-4S] cluster as a cofactor.

The enzyme catalyses isopentenyl diphosphate + 2 oxidized [2Fe-2S]-[ferredoxin] + H2O = (2E)-4-hydroxy-3-methylbut-2-enyl diphosphate + 2 reduced [2Fe-2S]-[ferredoxin] + 2 H(+). The catalysed reaction is dimethylallyl diphosphate + 2 oxidized [2Fe-2S]-[ferredoxin] + H2O = (2E)-4-hydroxy-3-methylbut-2-enyl diphosphate + 2 reduced [2Fe-2S]-[ferredoxin] + 2 H(+). The protein operates within isoprenoid biosynthesis; dimethylallyl diphosphate biosynthesis; dimethylallyl diphosphate from (2E)-4-hydroxy-3-methylbutenyl diphosphate: step 1/1. Its pathway is isoprenoid biosynthesis; isopentenyl diphosphate biosynthesis via DXP pathway; isopentenyl diphosphate from 1-deoxy-D-xylulose 5-phosphate: step 6/6. Catalyzes the conversion of 1-hydroxy-2-methyl-2-(E)-butenyl 4-diphosphate (HMBPP) into a mixture of isopentenyl diphosphate (IPP) and dimethylallyl diphosphate (DMAPP). Acts in the terminal step of the DOXP/MEP pathway for isoprenoid precursor biosynthesis. This Buchnera aphidicola subsp. Schizaphis graminum (strain Sg) protein is 4-hydroxy-3-methylbut-2-enyl diphosphate reductase.